Reading from the N-terminus, the 546-residue chain is Medium-chain-fatty-acid--CoA ligase (546 aa).

A Mg(2+)-binding site is contributed by Thr185. Residues Trp235 and Thr329 each contribute to the ATP site. Mg(2+) is bound at residue Glu330. Positions 417, 434, 438, and 443 each coordinate ATP.

This sequence belongs to the ATP-dependent AMP-binding enzyme family.

The protein localises to the cytoplasm. The catalysed reaction is a medium-chain fatty acid + ATP + CoA = a medium-chain fatty acyl-CoA + AMP + diphosphate. The protein operates within lipid metabolism; fatty acid metabolism. The protein is Medium-chain-fatty-acid--CoA ligase of Ectopseudomonas oleovorans (Pseudomonas oleovorans).